A 99-amino-acid polypeptide reads, in one-letter code: Integration host factor subunit alpha (99 aa).

The segment at 49 to 73 is disordered; sequence FGNFDLRDKNQRPGRNPKTGEDIPI.

The protein belongs to the bacterial histone-like protein family. Heterodimer of an alpha and a beta chain.

Functionally, this protein is one of the two subunits of integration host factor, a specific DNA-binding protein that functions in genetic recombination as well as in transcriptional and translational control. This is Integration host factor subunit alpha (ihfA) from Serratia marcescens.